The sequence spans 273 residues: Dermonecrotic toxin LdSicTox-alphaIB3aiv (273 aa).

His5 is a catalytic residue. 2 residues coordinate Mg(2+): Glu25 and Asp27. His41 serves as the catalytic Nucleophile. Intrachain disulfides connect Cys45–Cys51 and Cys47–Cys190. Asp85 contributes to the Mg(2+) binding site.

It belongs to the arthropod phospholipase D family. Class II subfamily. The cofactor is Mg(2+). In terms of tissue distribution, expressed by the venom gland.

Its subcellular location is the secreted. The enzyme catalyses an N-(acyl)-sphingosylphosphocholine = an N-(acyl)-sphingosyl-1,3-cyclic phosphate + choline. It catalyses the reaction an N-(acyl)-sphingosylphosphoethanolamine = an N-(acyl)-sphingosyl-1,3-cyclic phosphate + ethanolamine. It carries out the reaction a 1-acyl-sn-glycero-3-phosphocholine = a 1-acyl-sn-glycero-2,3-cyclic phosphate + choline. The catalysed reaction is a 1-acyl-sn-glycero-3-phosphoethanolamine = a 1-acyl-sn-glycero-2,3-cyclic phosphate + ethanolamine. In terms of biological role, dermonecrotic toxins cleave the phosphodiester linkage between the phosphate and headgroup of certain phospholipids (sphingolipid and lysolipid substrates), forming an alcohol (often choline) and a cyclic phosphate. This toxin acts on sphingomyelin (SM). It may also act on ceramide phosphoethanolamine (CPE), lysophosphatidylcholine (LPC) and lysophosphatidylethanolamine (LPE), but not on lysophosphatidylserine (LPS), and lysophosphatidylglycerol (LPG). It acts by transphosphatidylation, releasing exclusively cyclic phosphate products as second products. Induces dermonecrosis, hemolysis, increased vascular permeability, edema, inflammatory response, and platelet aggregation. In Loxosceles deserta (Desert recluse spider), this protein is Dermonecrotic toxin LdSicTox-alphaIB3aiv.